The chain runs to 512 residues: Probable DNA ligase (512 aa).

Glutamate 208 provides a ligand contact to ATP. Lysine 210 serves as the catalytic N6-AMP-lysine intermediate. ATP is bound by residues arginine 215, arginine 230, glutamate 259, phenylalanine 299, arginine 374, and lysine 380.

It belongs to the ATP-dependent DNA ligase family. Mg(2+) serves as cofactor.

It carries out the reaction ATP + (deoxyribonucleotide)n-3'-hydroxyl + 5'-phospho-(deoxyribonucleotide)m = (deoxyribonucleotide)n+m + AMP + diphosphate.. Its function is as follows. DNA ligase that seals nicks in double-stranded DNA during DNA replication, DNA recombination and DNA repair. The chain is Probable DNA ligase from Streptomyces avermitilis (strain ATCC 31267 / DSM 46492 / JCM 5070 / NBRC 14893 / NCIMB 12804 / NRRL 8165 / MA-4680).